A 1019-amino-acid chain; its full sequence is Photoactivated adenylate cyclase subunit alpha-like protein FB (1019 aa).

One can recognise a BLUF 1 domain in the interval 55–148; the sequence is LRRLMYLSAS…GRLYGEWHMK (94 aa). The region spanning 204–332 is the Guanylate cyclase 1 domain; sequence VVTFIYLVEF…DCINTASRIT (129 aa). Residues 467 to 559 form the BLUF 2 domain; sequence LITLTYISQA…REYGSPLDMT (93 aa). Residues 615–744 enclose the Guanylate cyclase 2 domain; that stretch reads VLLATDICSF…EVSARVMEVV (130 aa). The segment covering 825–839 has biased composition (low complexity); sequence APGRGAPAGGIPSSP. The segment at 825–862 is disordered; it reads APGRGAPAGGIPSSPKVRPPGRTNSVSSYTPDPNEALD. The span at 846-855 shows a compositional bias: polar residues; sequence RTNSVSSYTP.

It belongs to the adenylyl cyclase class-4/guanylyl cyclase family. As to quaternary structure, heterotetramer of two alpha and two beta subunits.

It is found in the cell projection. Its subcellular location is the cilium. The protein localises to the flagellum. This chain is Photoactivated adenylate cyclase subunit alpha-like protein FB, found in Euglena gracilis.